Here is a 163-residue protein sequence, read N- to C-terminus: Protein-export protein SecB (163 aa).

It belongs to the SecB family. As to quaternary structure, homotetramer, a dimer of dimers. One homotetramer interacts with 1 SecA dimer.

It is found in the cytoplasm. One of the proteins required for the normal export of preproteins out of the cell cytoplasm. It is a molecular chaperone that binds to a subset of precursor proteins, maintaining them in a translocation-competent state. It also specifically binds to its receptor SecA. This Methylibium petroleiphilum (strain ATCC BAA-1232 / LMG 22953 / PM1) protein is Protein-export protein SecB.